The chain runs to 279 residues: Thymidylate synthase (279 aa).

132-133 (RR) contacts dUMP. The Nucleophile role is filled by Cys-153. Residues 178 to 181 (RSND), Asn-189, and 219 to 221 (HIY) contribute to the dUMP site. Asp-181 lines the (6R)-5,10-methylene-5,6,7,8-tetrahydrofolate pocket. Ala-278 provides a ligand contact to (6R)-5,10-methylene-5,6,7,8-tetrahydrofolate.

Belongs to the thymidylate synthase family. Bacterial-type ThyA subfamily. Homodimer.

The protein localises to the cytoplasm. The enzyme catalyses dUMP + (6R)-5,10-methylene-5,6,7,8-tetrahydrofolate = 7,8-dihydrofolate + dTMP. It participates in pyrimidine metabolism; dTTP biosynthesis. Catalyzes the reductive methylation of 2'-deoxyuridine-5'-monophosphate (dUMP) to 2'-deoxythymidine-5'-monophosphate (dTMP) while utilizing 5,10-methylenetetrahydrofolate (mTHF) as the methyl donor and reductant in the reaction, yielding dihydrofolate (DHF) as a by-product. This enzymatic reaction provides an intracellular de novo source of dTMP, an essential precursor for DNA biosynthesis. This Lactococcus lactis subsp. lactis (strain IL1403) (Streptococcus lactis) protein is Thymidylate synthase.